Consider the following 842-residue polypeptide: Protein translocase subunit SecA (842 aa).

ATP contacts are provided by residues Gln85, 103–107 (GEGKT), and Asp493. 4 residues coordinate Zn(2+): Cys825, Cys827, Cys836, and His837.

This sequence belongs to the SecA family. Monomer and homodimer. Part of the essential Sec protein translocation apparatus which comprises SecA, SecYEG and auxiliary proteins SecDF. Other proteins may also be involved. The cofactor is Zn(2+).

The protein resides in the cell membrane. It localises to the cytoplasm. It carries out the reaction ATP + H2O + cellular proteinSide 1 = ADP + phosphate + cellular proteinSide 2.. In terms of biological role, part of the Sec protein translocase complex. Interacts with the SecYEG preprotein conducting channel. Has a central role in coupling the hydrolysis of ATP to the transfer of proteins into and across the cell membrane, serving as an ATP-driven molecular motor driving the stepwise translocation of polypeptide chains across the membrane. The protein is Protein translocase subunit SecA of Streptococcus equi subsp. zooepidemicus (strain H70).